The sequence spans 228 residues: Urease accessory protein UreE (228 aa).

A disordered region spans residues 188–228; that stretch reads PLDEPHGSGLHIHAIHSHGDGHSHDHDHSHSHGDHDHDHKH. Positions 204-228 are enriched in basic and acidic residues; the sequence is SHGDGHSHDHDHSHSHGDHDHDHKH.

It belongs to the UreE family.

It is found in the cytoplasm. In terms of biological role, involved in urease metallocenter assembly. Binds nickel. Probably functions as a nickel donor during metallocenter assembly. This is Urease accessory protein UreE from Yersinia kristensenii.